The following is a 192-amino-acid chain: uncharacterized protein (192 aa).

A run of 6 helical transmembrane segments spans residues valine 5 to leucine 22, phenylalanine 42 to tyrosine 61, leucine 66 to leucine 88, tryptophan 101 to leucine 118, leucine 122 to leucine 139, and alanine 159 to phenylalanine 181.

The protein resides in the cell membrane. This is an uncharacterized protein from Treponema pallidum (strain Nichols).